The primary structure comprises 496 residues: NADP-dependent glyceraldehyde-3-phosphate dehydrogenase (496 aa).

Alanine 2 bears the N-acetylalanine mark. At threonine 4 the chain carries Phosphothreonine. Residues arginine 116 and 169 to 170 contribute to the substrate site; that span reads NY. NADP(+) contacts are provided by lysine 192, threonine 195, and aspartate 230. 245–249 serves as a coordination point for NAD(+); it reads GGDTG. The Proton acceptor role is filled by glutamate 264. Residue 297 to 299 participates in substrate binding; the sequence is RCT. Residue cysteine 298 is the Nucleophile of the active site. Glutamate 391 lines the NADP(+) pocket. Arginine 451 provides a ligand contact to substrate.

Belongs to the aldehyde dehydrogenase family.

It localises to the cytoplasm. The enzyme catalyses D-glyceraldehyde 3-phosphate + NADP(+) + H2O = (2R)-3-phosphoglycerate + NADPH + 2 H(+). Important as a means of generating NADPH for biosynthetic reactions. In Arabidopsis thaliana (Mouse-ear cress), this protein is NADP-dependent glyceraldehyde-3-phosphate dehydrogenase (ALDH11A3).